Reading from the N-terminus, the 197-residue chain is Ras-related protein RabG2 (197 aa).

GTP contacts are provided by residues 13 to 20, 61 to 65, and 119 to 122; these read GDSAVGKT, DTAGQ, and NKCD. The tract at residues 175 to 197 is disordered; that stretch reads SKPSVVNPGSGGTSNTGGKKKFC. Cysteine 197 is lipidated: S-geranylgeranyl cysteine.

The protein belongs to the small GTPase superfamily. Rab family.

The protein resides in the cell membrane. The sequence is that of Ras-related protein RabG2 (rabG2) from Dictyostelium discoideum (Social amoeba).